The sequence spans 67 residues: CAMPATH-1 antigen (67 aa).

Positions 1-25 are cleaved as a signal peptide; that stretch reads MKGFLFLLLTISLLVMIQIQTGVLG. N-linked (GlcNAc...) asparagine glycosylation is present at asparagine 26. Serine 45 is lipidated: GPI-anchor amidated serine. A propeptide spans 46–67 (removed in mature form); it reads SLGGGSVLLFLANTLIQLFYLS.

In terms of tissue distribution, epididymis. Highest levels are found in the distal corpus and cauda. Little or no expression in the caput and proximal cauda regions.

The protein resides in the cell membrane. May play a role in carrying and orienting carbohydrate, as well as having a more specific role. The sequence is that of CAMPATH-1 antigen (CD52) from Canis lupus familiaris (Dog).